A 322-amino-acid polypeptide reads, in one-letter code: Transaldolase (322 aa).

The Schiff-base intermediate with substrate role is filled by Lys-136.

The protein belongs to the transaldolase family. Type 1 subfamily. In terms of assembly, homodimer.

It localises to the cytoplasm. It carries out the reaction D-sedoheptulose 7-phosphate + D-glyceraldehyde 3-phosphate = D-erythrose 4-phosphate + beta-D-fructose 6-phosphate. It participates in carbohydrate degradation; pentose phosphate pathway; D-glyceraldehyde 3-phosphate and beta-D-fructose 6-phosphate from D-ribose 5-phosphate and D-xylulose 5-phosphate (non-oxidative stage): step 2/3. In terms of biological role, transaldolase is important for the balance of metabolites in the pentose-phosphate pathway. This Xanthomonas oryzae pv. oryzae (strain MAFF 311018) protein is Transaldolase.